Here is a 354-residue protein sequence, read N- to C-terminus: Protein-arginine kinase (354 aa).

In terms of domain architecture, Phosphagen kinase C-terminal spans 24–254; it reads IVLSSRIRLA…QQIIQQEKLA (231 aa). ATP is bound by residues 27 to 31, H92, R125, 176 to 180, and 207 to 212; these read SSRIR, RASVM, and RGIYGE. Positions 337-342 match the RDXXRA motif of the pArg binding pocket involved in allosteric regulation motif; the sequence is RDYRRA.

The protein belongs to the ATP:guanido phosphotransferase family.

The enzyme catalyses L-arginyl-[protein] + ATP = N(omega)-phospho-L-arginyl-[protein] + ADP + H(+). Appears to be allosterically activated by the binding of pArg-containing polypeptides to the pArg-binding pocket localized in the C-terminal domain of McsB. Functionally, catalyzes the specific phosphorylation of arginine residues in a large number of proteins. Is part of the bacterial stress response system. Protein arginine phosphorylation has a physiologically important role and is involved in the regulation of many critical cellular processes, such as protein homeostasis, motility, competence, and stringent and stress responses, by regulating gene expression and protein activity. This Bacillus cereus (strain B4264) protein is Protein-arginine kinase.